We begin with the raw amino-acid sequence, 314 residues long: BTB/POZ domain-containing adapter for CUL3-mediated RhoA degradation protein 2 (314 aa).

The BTB domain maps to 32 to 100; the sequence is KYVRLNVGGS…LRDDTIALPK (69 aa).

Belongs to the BACURD family. Component of the BCR(TNFAIP1) E3 ubiquitin ligase complex, at least composed of CUL3, TNFAIP1/BACURD2 and RBX1.

The protein localises to the cytoplasm. It is found in the nucleus. It localises to the endosome. It functions in the pathway protein modification; protein ubiquitination. In terms of biological role, substrate-specific adapter of a BCR (BTB-CUL3-RBX1) E3 ubiquitin-protein ligase complex involved in regulation of cytoskeleton structure. The BCR(TNFAIP1) E3 ubiquitin ligase complex mediates the ubiquitination of target proteins, leading to their degradation by the proteasome. This Gallus gallus (Chicken) protein is BTB/POZ domain-containing adapter for CUL3-mediated RhoA degradation protein 2 (TNFAIP1).